Consider the following 780-residue polypeptide: Probable trehalase (780 aa).

The tract at residues 1–48 is disordered; sequence MVDFLPKVTEINPPSEGNDGEDNIKPLSSGSEQRPLKEEGQQGGRRHH. 2 positions are modified to phosphoserine: S52 and S53. A Phosphothreonine modification is found at T88. At S112 the chain carries Phosphoserine. Residues R331, 338 to 339, N375, R384, 384 to 386, and G505 contribute to the substrate site; these read WD and RSQ. Catalysis depends on proton donor/acceptor residues D507 and E703.

The protein belongs to the glycosyl hydrolase 37 family.

It carries out the reaction alpha,alpha-trehalose + H2O = alpha-D-glucose + beta-D-glucose. This is Probable trehalase (NTH2) from Saccharomyces cerevisiae (strain ATCC 204508 / S288c) (Baker's yeast).